The sequence spans 196 residues: Peptidyl-tRNA hydrolase (196 aa).

Tyrosine 14 contributes to the tRNA binding site. Histidine 19 (proton acceptor) is an active-site residue. TRNA contacts are provided by phenylalanine 64, asparagine 66, and asparagine 112.

The protein belongs to the PTH family. As to quaternary structure, monomer.

It is found in the cytoplasm. The catalysed reaction is an N-acyl-L-alpha-aminoacyl-tRNA + H2O = an N-acyl-L-amino acid + a tRNA + H(+). Functionally, hydrolyzes ribosome-free peptidyl-tRNAs (with 1 or more amino acids incorporated), which drop off the ribosome during protein synthesis, or as a result of ribosome stalling. Its function is as follows. Catalyzes the release of premature peptidyl moieties from peptidyl-tRNA molecules trapped in stalled 50S ribosomal subunits, and thus maintains levels of free tRNAs and 50S ribosomes. This chain is Peptidyl-tRNA hydrolase, found in Solibacter usitatus (strain Ellin6076).